The sequence spans 944 residues: Translation factor GUF1 homolog, mitochondrial (944 aa).

Residues 201-379 enclose the tr-type G domain; sequence KNVRNFCILA…IITDIPYPPI (179 aa). Residues 210–217, 271–275, and 325–328 each bind GTP; these read AHIDSGKS, DTPGH, and NKID.

This sequence belongs to the TRAFAC class translation factor GTPase superfamily. Classic translation factor GTPase family. LepA subfamily.

The protein localises to the mitochondrion inner membrane. It carries out the reaction GTP + H2O = GDP + phosphate + H(+). In terms of biological role, promotes mitochondrial protein synthesis. May act as a fidelity factor of the translation reaction, by catalyzing a one-codon backward translocation of tRNAs on improperly translocated ribosomes. Binds to mitochondrial ribosomes in a GTP-dependent manner. The protein is Translation factor GUF1 homolog, mitochondrial of Plasmodium yoelii yoelii.